We begin with the raw amino-acid sequence, 509 residues long: Cytochrome P450 monooxygenase hepC (509 aa).

Residues 5–25 form a helical membrane-spanning segment; it reads MIIPSFWTGTAIIGLVACAYV. Position 454 (C454) interacts with heme. A glycan (N-linked (GlcNAc...) asparagine) is linked at N491.

This sequence belongs to the cytochrome P450 family. Heme serves as cofactor.

The protein resides in the membrane. The protein operates within secondary metabolite biosynthesis. In terms of biological role, cytochrome P450 monooxygenase; part of the gene cluster that mediates the biosynthesis of heptelidic acid (HA), a sesquiterpene lactone that acts as an inhibitor of glyceraldehyde-3-phosphatedehydrogenase (GAPDH) and a growth inhibitor of the salt-tolerant lactic acid bacteria in soy sauce brewing. In Aspergillus oryzae (strain ATCC 42149 / RIB 40) (Yellow koji mold), this protein is Cytochrome P450 monooxygenase hepC.